We begin with the raw amino-acid sequence, 111 residues long: Protein RnfH (111 aa).

The segment at 88 to 111 (RRRRVQKTRESGTREGQKWLRGGA) is disordered. The segment covering 94–105 (KTRESGTREGQK) has biased composition (basic and acidic residues).

Belongs to the UPF0125 (RnfH) family.

The protein is Protein RnfH of Cupriavidus pinatubonensis (strain JMP 134 / LMG 1197) (Cupriavidus necator (strain JMP 134)).